The chain runs to 304 residues: MIVRPQQHWIRLIFVWHGSVLSKIFSRLLLNFLLSIAVIIMLPWYTMLGIKFTLAPFSILGVAIAIFLGFRNNACYARYVEARHLWGQLMIASRSILREVKTTLPDERGIEDFVRLQIAFAHCLRMTLRRQPQTQVLGNYLDQEALQKVVASHSPANRILLLMGEWLAIRRRSGKLSDILFHSLNNRLNDMSSVLAGCERIANTPVPFAYTLILHRTVYLFCIMLPFALVVDLHYMTPFISVLISYTFIALDALAEELEDPFGTENNDLPLDAICNAIEIDLLQMNDERDIPAKRIPDKRYQLT.

The next 4 helical transmembrane spans lie at 28 to 48 (LLLN…YTML), 50 to 70 (IKFT…FLGF), 209 to 229 (AYTL…PFAL), and 235 to 255 (YMTP…DALA).

It belongs to the anion channel-forming bestrophin (TC 1.A.46) family.

The protein localises to the cell membrane. In Salmonella typhi, this protein is Voltage-dependent anion channel-forming protein YneE (yneE).